A 128-amino-acid chain; its full sequence is Sulfurtransferase TusD (128 aa).

Residue Cys-78 is the Cysteine persulfide intermediate of the active site.

It belongs to the DsrE/TusD family. As to quaternary structure, heterohexamer, formed by a dimer of trimers. The hexameric TusBCD complex contains 2 copies each of TusB, TusC and TusD. The TusBCD complex interacts with TusE.

It is found in the cytoplasm. Functionally, part of a sulfur-relay system required for 2-thiolation of 5-methylaminomethyl-2-thiouridine (mnm(5)s(2)U) at tRNA wobble positions. Accepts sulfur from TusA and transfers it in turn to TusE. In Escherichia coli O7:K1 (strain IAI39 / ExPEC), this protein is Sulfurtransferase TusD.